Here is a 267-residue protein sequence, read N- to C-terminus: tRNA pseudouridine synthase A (267 aa).

Residue Asp-51 is the Nucleophile of the active site. Tyr-109 provides a ligand contact to substrate.

It belongs to the tRNA pseudouridine synthase TruA family. In terms of assembly, homodimer.

The catalysed reaction is uridine(38/39/40) in tRNA = pseudouridine(38/39/40) in tRNA. Functionally, formation of pseudouridine at positions 38, 39 and 40 in the anticodon stem and loop of transfer RNAs. In Staphylococcus epidermidis (strain ATCC 12228 / FDA PCI 1200), this protein is tRNA pseudouridine synthase A.